We begin with the raw amino-acid sequence, 393 residues long: NAD(P)H-quinone oxidoreductase subunit H, chloroplastic (393 aa).

Belongs to the complex I 49 kDa subunit family. In terms of assembly, NDH is composed of at least 16 different subunits, 5 of which are encoded in the nucleus.

The protein localises to the plastid. It is found in the chloroplast thylakoid membrane. It carries out the reaction a plastoquinone + NADH + (n+1) H(+)(in) = a plastoquinol + NAD(+) + n H(+)(out). The catalysed reaction is a plastoquinone + NADPH + (n+1) H(+)(in) = a plastoquinol + NADP(+) + n H(+)(out). NDH shuttles electrons from NAD(P)H:plastoquinone, via FMN and iron-sulfur (Fe-S) centers, to quinones in the photosynthetic chain and possibly in a chloroplast respiratory chain. The immediate electron acceptor for the enzyme in this species is believed to be plastoquinone. Couples the redox reaction to proton translocation, and thus conserves the redox energy in a proton gradient. This Oenothera biennis (German evening primrose) protein is NAD(P)H-quinone oxidoreductase subunit H, chloroplastic.